The primary structure comprises 932 residues: RNA-binding protein 12 (932 aa).

Positions I97 to R116 are disordered. Low complexity predominate over residues P98 to R116. The 76-residue stretch at L304 to E379 folds into the RRM 1 domain. A phosphoserine mark is found at S352 and S375. The tract at residues Q393–S424 is disordered. Polar residues predominate over residues L408 to Q417. Residues S420, S422, and S424 each carry the phosphoserine modification. Residues F430–K507 form the RRM 2 domain. Residue S525 is modified to Phosphoserine. Over residues N717–G734 the composition is skewed to low complexity. The tract at residues N717–P853 is disordered. A compositionally biased stretch (gly residues) spans S783–G811. Residues A824 to G836 are compositionally biased toward pro residues. The region spanning T856–G932 is the RRM 3 domain.

The protein resides in the nucleus. The polypeptide is RNA-binding protein 12 (RBM12) (Macaca mulatta (Rhesus macaque)).